A 143-amino-acid polypeptide reads, in one-letter code: Oxoglutarate dehydrogenase inhibitor (143 aa).

At Thr14 the chain carries Phosphothreonine. The FHA domain maps to 68–117 (TTAGRHPESDIFLDDVTVSRRHAEFRINEGEFEVVDVGSLNGTYVNREPR).

The protein localises to the cytoplasm. In terms of biological role, an essential component of the PknG signaling pathway. When unphosphorylated, it inhibits the activity of 2-oxoglutarate dehydrogenase. When phosphorylated it does not inhibit 2-oxoglutarate dehydrogenase. The chain is Oxoglutarate dehydrogenase inhibitor (odhI) from Corynebacterium glutamicum (strain ATCC 13032 / DSM 20300 / JCM 1318 / BCRC 11384 / CCUG 27702 / LMG 3730 / NBRC 12168 / NCIMB 10025 / NRRL B-2784 / 534).